A 314-amino-acid chain; its full sequence is 3'-5' exoribonuclease YhaM (314 aa).

The HD domain maps to His163 to Lys279.

Belongs to the YhaM family.

Functionally, shows a 3'-5' exoribonuclease activity. This Bacillus velezensis (strain DSM 23117 / BGSC 10A6 / LMG 26770 / FZB42) (Bacillus amyloliquefaciens subsp. plantarum) protein is 3'-5' exoribonuclease YhaM.